The sequence spans 115 residues: DNA-binding protein TV0008 (115 aa).

Residues 18-37 (LQRQAMQRQMAEEEEKQREI) form a disordered region.

This sequence belongs to the PDCD5 family.

In Thermoplasma volcanium (strain ATCC 51530 / DSM 4299 / JCM 9571 / NBRC 15438 / GSS1), this protein is DNA-binding protein TV0008.